A 473-amino-acid polypeptide reads, in one-letter code: TOX high mobility group box family member 2 (473 aa).

4 disordered regions span residues 1–42 (MSDG…SLLH), 139–211 (GLRS…VSAY), 277–302 (SKSP…PPKQ), and 340–473 (LLPG…PSAR). A compositionally biased stretch (polar residues) spans 8 to 20 (LLSTSQTYNSQGE). A required for transcriptional activation region spans residues 25–63 (YEIPPITPPNLPEPSLLHLGDHEAGYHSLCHGLAPNGLL). The segment covering 153 to 164 (GSKSATPSPSSS) has biased composition (low complexity). Residues 171 to 188 (DAHFKISGEKRPSTDPGK) are compositionally biased toward basic and acidic residues. A Nuclear localization signal motif is present at residues 172–201 (AHFKISGEKRPSTDPGKKAKNPKKKKKKDP). A compositionally biased stretch (basic residues) spans 189 to 199 (KAKNPKKKKKK). A DNA-binding region (HMG box) is located at residues 204–272 (PQKPVSAYAL…EYLKALAAYR (69 aa)). Composition is skewed to low complexity over residues 373 to 382 (LLSPPLSMSP) and 415 to 440 (SDFP…WDGS). Positions 463–473 (SPKNLQEPSAR) are enriched in polar residues.

Highly expressed in ovary, where it is restricted to undifferentiated granulosa cells. Expressed in hypothalamus, pituitary gland, testis and uterus.

It is found in the nucleus. Functionally, putative transcriptional activator involved in the hypothalamo-pituitary-gonadal system. The sequence is that of TOX high mobility group box family member 2 (Tox2) from Rattus norvegicus (Rat).